The chain runs to 499 residues: Apolipoprotein N-acyltransferase (499 aa).

The next 6 helical transmembrane spans lie at 9–29, 50–70, 77–97, 114–134, 148–168, and 183–203; these read LLLG…PALL, LGYI…SIGV, FWWA…FFVS, FIFC…FTGL, ILIQ…VIYI, and LKVL…YGSV. Residues 220-464 form the CN hydrolase domain; sequence VQPSIPQTEK…DGLIPKKLDS (245 aa). The active-site Proton acceptor is the glutamate 259. Lysine 322 is an active-site residue. Catalysis depends on cysteine 372, which acts as the Nucleophile. Residues 466–486 traverse the membrane as a helical segment; sequence TIFSKFGNITILLIVFFIFLV.

It belongs to the CN hydrolase family. Apolipoprotein N-acyltransferase subfamily.

Its subcellular location is the cell inner membrane. It catalyses the reaction N-terminal S-1,2-diacyl-sn-glyceryl-L-cysteinyl-[lipoprotein] + a glycerophospholipid = N-acyl-S-1,2-diacyl-sn-glyceryl-L-cysteinyl-[lipoprotein] + a 2-acyl-sn-glycero-3-phospholipid + H(+). It functions in the pathway protein modification; lipoprotein biosynthesis (N-acyl transfer). In terms of biological role, catalyzes the phospholipid dependent N-acylation of the N-terminal cysteine of apolipoprotein, the last step in lipoprotein maturation. The chain is Apolipoprotein N-acyltransferase from Rickettsia bellii (strain RML369-C).